The chain runs to 291 residues: Bifunctional protein FolD (291 aa).

NADP(+) contacts are provided by residues 165–167 (GRS), Ser-190, and Ile-231.

Belongs to the tetrahydrofolate dehydrogenase/cyclohydrolase family. Homodimer.

The catalysed reaction is (6R)-5,10-methylene-5,6,7,8-tetrahydrofolate + NADP(+) = (6R)-5,10-methenyltetrahydrofolate + NADPH. The enzyme catalyses (6R)-5,10-methenyltetrahydrofolate + H2O = (6R)-10-formyltetrahydrofolate + H(+). It participates in one-carbon metabolism; tetrahydrofolate interconversion. In terms of biological role, catalyzes the oxidation of 5,10-methylenetetrahydrofolate to 5,10-methenyltetrahydrofolate and then the hydrolysis of 5,10-methenyltetrahydrofolate to 10-formyltetrahydrofolate. This chain is Bifunctional protein FolD, found in Azoarcus sp. (strain BH72).